Consider the following 389-residue polypeptide: Acetylornithine aminotransferase (389 aa).

Residues 104 to 105 and Phe131 contribute to the pyridoxal 5'-phosphate site; that span reads GT. Residue Arg134 coordinates N(2)-acetyl-L-ornithine. 216 to 219 serves as a coordination point for pyridoxal 5'-phosphate; that stretch reads DEVQ. The residue at position 245 (Lys245) is an N6-(pyridoxal phosphate)lysine. Residue Ser273 participates in N(2)-acetyl-L-ornithine binding. Pyridoxal 5'-phosphate is bound at residue Thr274.

It belongs to the class-III pyridoxal-phosphate-dependent aminotransferase family. ArgD subfamily. Homodimer. The cofactor is pyridoxal 5'-phosphate.

The protein resides in the cytoplasm. The catalysed reaction is N(2)-acetyl-L-ornithine + 2-oxoglutarate = N-acetyl-L-glutamate 5-semialdehyde + L-glutamate. Its pathway is amino-acid biosynthesis; L-arginine biosynthesis; N(2)-acetyl-L-ornithine from L-glutamate: step 4/4. The chain is Acetylornithine aminotransferase from Methanopyrus kandleri (strain AV19 / DSM 6324 / JCM 9639 / NBRC 100938).